The following is a 412-amino-acid chain: Ornithine cyclodeaminase (412 aa).

10 residues coordinate NAD(+): N237, A238, D316, T348, M349, L350, H351, D369, D392, and V393.

The protein belongs to the AgrE/ArgZ ornithine cyclodeaminase family. It depends on NAD(+) as a cofactor.

It carries out the reaction L-ornithine = L-proline + NH4(+). In terms of biological role, catalyzes the conversion of ornithine to proline, with the release of ammonia. The chain is Ornithine cyclodeaminase from Methanopyrus kandleri (strain AV19 / DSM 6324 / JCM 9639 / NBRC 100938).